The primary structure comprises 454 residues: Maintenance of mitochondrial morphology protein 1 (454 aa).

Residues 1–128 lie on the Lumenal side of the membrane; sequence MSMVIGIGDL…QSSGWGFAHG (128 aa). The helical transmembrane segment at 129–149 threads the bilayer; it reads LLVGQLSVVAVLAFFIKFFIF. Residues 150 to 454 are Cytoplasmic-facing; sequence GNSSMARPLM…SESETAVDSN (305 aa). The 224-residue stretch at 207–430 folds into the SMP-LTD domain; that stretch reads QSESLDWFNV…EPRFQLIELP (224 aa).

It belongs to the MMM1 family. Homodimer. Component of the ER-mitochondria encounter structure (ERMES) or MDM complex, composed of MMM1, MDM10, MDM12 and MDM34. An MMM1 homodimer associates with one molecule of MDM12 on each side in a pairwise head-to-tail manner, and the SMP-LTD domains of MMM1 and MDM12 generate a continuous hydrophobic tunnel for phospholipid trafficking.

It localises to the endoplasmic reticulum membrane. Its function is as follows. Component of the ERMES/MDM complex, which serves as a molecular tether to connect the endoplasmic reticulum (ER) and mitochondria. Components of this complex are involved in the control of mitochondrial shape and protein biogenesis, and function in nonvesicular lipid trafficking between the ER and mitochondria. The MDM12-MMM1 subcomplex functions in the major beta-barrel assembly pathway that is responsible for biogenesis of all outer membrane beta-barrel proteins, and acts in a late step after the SAM complex. The MDM10-MDM12-MMM1 subcomplex further acts in the TOM40-specific pathway after the action of the MDM12-MMM1 complex. Essential for establishing and maintaining the structure of mitochondria and maintenance of mtDNA nucleoids. The sequence is that of Maintenance of mitochondrial morphology protein 1 from Komagataella phaffii (strain GS115 / ATCC 20864) (Yeast).